A 95-amino-acid polypeptide reads, in one-letter code: Aspartyl/glutamyl-tRNA(Asn/Gln) amidotransferase subunit C (95 aa).

It belongs to the GatC family. In terms of assembly, heterotrimer of A, B and C subunits.

It carries out the reaction L-glutamyl-tRNA(Gln) + L-glutamine + ATP + H2O = L-glutaminyl-tRNA(Gln) + L-glutamate + ADP + phosphate + H(+). The enzyme catalyses L-aspartyl-tRNA(Asn) + L-glutamine + ATP + H2O = L-asparaginyl-tRNA(Asn) + L-glutamate + ADP + phosphate + 2 H(+). In terms of biological role, allows the formation of correctly charged Asn-tRNA(Asn) or Gln-tRNA(Gln) through the transamidation of misacylated Asp-tRNA(Asn) or Glu-tRNA(Gln) in organisms which lack either or both of asparaginyl-tRNA or glutaminyl-tRNA synthetases. The reaction takes place in the presence of glutamine and ATP through an activated phospho-Asp-tRNA(Asn) or phospho-Glu-tRNA(Gln). This Dehalococcoides mccartyi (strain ATCC BAA-2100 / JCM 16839 / KCTC 5957 / BAV1) protein is Aspartyl/glutamyl-tRNA(Asn/Gln) amidotransferase subunit C.